We begin with the raw amino-acid sequence, 173 residues long: UPF0598 protein F59C6.12 (173 aa).

This sequence belongs to the UPF0598 family.

The polypeptide is UPF0598 protein F59C6.12 (Caenorhabditis elegans).